Here is a 118-residue protein sequence, read N- to C-terminus: UPF0295 protein BC_0520 (118 aa).

The next 2 membrane-spanning stretches (helical) occupy residues 12-32 and 43-63; these read IRTF…LGVF and FMMV…WIGM.

The protein belongs to the UPF0295 family.

The protein resides in the cell membrane. This Bacillus cereus (strain ATCC 14579 / DSM 31 / CCUG 7414 / JCM 2152 / NBRC 15305 / NCIMB 9373 / NCTC 2599 / NRRL B-3711) protein is UPF0295 protein BC_0520.